A 1107-amino-acid polypeptide reads, in one-letter code: Unconventional myosin-Ie (1107 aa).

The Myosin motor domain occupies 19–692 (SGVDDMVLLS…SLFLLEEMRE (674 aa)). An ATP-binding site is contributed by 112-119 (GESGAGKT). Residues 581-591 (PHYIRCIKPNE) are actin-binding. Positions 695 to 724 (YDGYARVIQKTWRKFVARKKYVQMREDASD) constitute an IQ domain. One can recognise a TH1 domain in the interval 730-922 (KERRRNSINR…NKVLQVSIGP (193 aa)). The tract at residues 920 to 1052 (IGPGLPKNAR…KPQPKPKPQV (133 aa)) is disordered. 3 stretches are compositionally biased toward polar residues: residues 933-949 (RNTV…NNNY), 977-989 (SGNQ…SLYT), and 998-1012 (RQQS…QTPE). Ser-1001 is modified (phosphoserine). The segment covering 1034-1051 (RPPPAGGRPKPQPKPKPQ) has biased composition (pro residues). An SH3 domain is found at 1050 to 1107 (PQVPQCKALYAYDAQDTDELSFNANDVIDIIKEDPSGWWTGRLRGKQGLFPNNYVTKI).

This sequence belongs to the TRAFAC class myosin-kinesin ATPase superfamily. Myosin family. Interacts with CALM and F-actin. Interacts (via SH3 domain) with SYNJ1, DNM1 and DNM2. Interacts with ARL14EP. Interacts with CARMIL1. Detected in brain stem, brain cortex, cerebellum, stomach, colon, heart, lung, liver, spleen and kidney. Detected in utricle, cochlea, outer hair cell bundle cuticular plate and vestibular epithelia (at protein level). Detected in cochlea and vestibular tissues. Detected in kidney, lung, spleen and intestine.

It is found in the cytoplasm. The protein localises to the cytoskeleton. The protein resides in the cytoplasmic vesicle. Its subcellular location is the clathrin-coated vesicle. It localises to the cell junction. Myosins are actin-based motor molecules with ATPase activity. Unconventional myosins serve in intracellular movements. Their highly divergent tails bind to membranous compartments, which are then moved relative to actin filaments. Binds to membranes containing anionic phospholipids via its tail domain. Involved in clathrin-mediated endocytosis and intracellular movement of clathrin-coated vesicles. Required for normal morphology of the glomerular basement membrane, normal development of foot processes by kidney podocytes and normal kidney function. In dendritic cells, may control the movement of class II-containing cytoplasmic vesicles along the actin cytoskeleton by connecting them with the actin network via ARL14EP and ARL14. This is Unconventional myosin-Ie (Myo1e) from Rattus norvegicus (Rat).